Here is a 662-residue protein sequence, read N- to C-terminus: ATP-dependent RNA helicase DDX3X (662 aa).

Position 2 is an N-acetylserine (serine 2). A required for TBK1 and IKBKE-dependent IFNB1 activation region spans residues serine 2 to proline 139. Residues leucine 12 to leucine 21 carry the Nuclear export signal motif. The segment at leucine 19–glutamate 144 is disordered. Residues leucine 21 to serine 34 show a composition bias toward polar residues. The segment at tyrosine 38–arginine 44 is interaction with EIF4E. Residues arginine 44–alanine 68 show a composition bias toward basic and acidic residues. The residue at position 55 (lysine 55) is an N6-acetyllysine. Phosphoserine is present on residues serine 82 and serine 90. Residues glycine 94–lysine 130 show a composition bias toward basic and acidic residues. An interaction with IKBKE region spans residues glycine 100–arginine 110. Positions glycine 100–asparagine 662 are interaction with GSK3B. Arginine 101 carries the post-translational modification Omega-N-methylarginine. At tyrosine 104 the chain carries Phosphotyrosine. At arginine 110 the chain carries Omega-N-methylarginine. N6-acetyllysine is present on lysine 118. Serine 131 is modified (phosphoserine). The segment at proline 139–glycine 172 is interaction with CHUK. The Q motif motif lies at glutamate 180–lysine 208. Serine 183 bears the Phosphoserine mark. Tyrosine 200–glutamine 207 is an ATP binding site. The 193-residue stretch at isoleucine 211–leucine 403 folds into the Helicase ATP-binding domain. A Glycyl lysine isopeptide (Lys-Gly) (interchain with G-Cter in SUMO2) cross-link involves residue lysine 215. Residue alanine 224–threonine 231 participates in ATP binding. The segment at alanine 250–arginine 259 is involved in stimulation of ATPase activity by DNA and RNA, nucleic acid binding and unwinding. Positions aspartate 347–aspartate 350 match the DEAD box motif. The 162-residue stretch at asparagine 414 to alanine 575 folds into the Helicase C-terminal domain. Position 456 is a phosphoserine (serine 456). The tract at residues glycine 536 to glycine 661 is interaction with NXF1. The residue at position 592 (arginine 592) is an Omega-N-methylarginine. Serine 594, serine 605, and serine 612 each carry phosphoserine. The tract at residues aspartate 601–glycine 633 is disordered. Residues glutamine 604–arginine 622 are compositionally biased toward low complexity. Arginine 617 and arginine 632 each carry omega-N-methylarginine. Gly residues predominate over residues serine 623–glycine 633.

This sequence belongs to the DEAD box helicase family. DDX3/DED1 subfamily. As to quaternary structure, homodimer; can bind RNA as a monomer and as a dimer/oligomer. Interacts with TDRD3. When phosphorylated, interacts with IRF3; the interaction facilitates the phosphorylation and activation of IRF3 by IKBKE. Directly interacts with XPO1/CRM1. The interaction with XPO1/CMR1 is dependent on the DDX3X nuclear export signal motif and XPO1 interaction with GTPase RAN in its active GTP-bound form. Weakly interacts with TBKBP1/SINTBAD. Directly interacts with TRAF3; this interaction stimulates TRAF3 'Lys-63' ubiquitination. Interacts with CSNK1E in a Wnt-dependent manner; this interaction greatly enhances CSNK1E affinity for ATP, stimulates its kinase activity and promotes CSNK1E-mediated DVL2 phosphorylation. In the presence of RNA, the interaction is decreased. Also interacts with CSNK1D and stimulates its kinase activity. Interacts with TRPV4; this interaction is decreased when the TRPV4 channel is activated, leading to DDX3X relocalization to the nucleus. Interacts with MAP3K14/NIK. Directly interacts with CHUK/IKKA after physiological activation of the TLR7 and TLR8 pathways; this interaction enhances CHUK autophosphorylation. May associate with EIF4F complex, composed of at least EIF4A, EIF4E and EIF4G1/EIF4G3. Directly interacts with EIF4E in an RNA-independent manner; this interaction enhances EIF4E cap-binding ability. Directly interacts with EIF4G1 in an RNA-independent manner. DDX3X competes with EIF4G1 for interaction with EIF4E. Interacts with EIF4A1 and EIF2S1 in an RNA-independent manner. Associates with the eukaryotic translation initiation factor 3 (eIF-3) complex, including with EIF3B and EIF3C subunits. Directly interacts with IKBKE/IKKE; this interaction stimulates IKBKE activating autophosphorylation and is induced upon viral infection. Interacts with TBK1. Interacts with SP1; this interaction potentiates SP1-induced CDKN1A/WAF1/CIP1 transcription. Interacts with GSK3A and GSK3B. Interacts with several death receptors, inclusing FAS, TNFRSF10A and TNFRSF10B. Recruited to TNFRSF10B in the absence of receptor stimulation. When TNFRSF10B is stimulated, further recruited to the receptor and cleaved by caspases. A large proteolytic fragment remains associated with TNFRSF10B. Interacts (via C-terminus) with NXF1/TAP; this interaction may be partly involved in DDX3X nuclear export and in NXF1 localization to stress granules. Identified in an mRNP complex, composed of at least DHX9, DDX3X, ELAVL1, HNRNPU, IGF2BP1/2, ILF3, PABPC1, PCBP2, PTBP2, STAU1, STAU2, SYNCRIP and YBX1. The interaction with IGF2BP1/2 is RNA-dependent. Directly interacts with PABPC1/PABP1 in an RNA-independent manner. This interaction increases in stressed cells and decreases during cell recovery. Interacts (via C-terminus) with MAVS/IPS-1; this interaction potentiates MAVS-mediated IFNB induction. Interacts with ERCC6/CBS. Interacts with DHX33 in an RNA-independent manner. Interacts with DDX5 in the cytoplasm; this interaction may be more efficient when both proteins are unphosphorylated. Interacts with RIGI. Interacts with IFIH1/MDA5. Interacts with NCAPH; this interaction may be important for the NCAPH localization at condensing chromosomes during mitosis. Interacts with NLRP3 (via NACHT domain) under inflammasome-activating conditions. Interacts with CAPRIN1. Interacts with HNF4A and NR0B2/SHP in an RNA-independent manner; this interaction disrupts the interaction between HNF4 and NR0B2 that forms inactive heterodimers and enhances the formation of active HNF4 homodimers. Interacts with CREBBP/CBP. Interacts with EP300/p300. Interacts with gamma-tubulin. Interacts with phosphorylated TP53. Directly interacts with RELA/p65; this interaction may trap RELA in the cytoplasm, impairing nuclear relocalization upon TNF activating signals. In terms of processing, phosphorylated by TBK1; the phosphorylation is required for the synergistic induction of IFNB mediated by TBK1 and DDX3X. Phosphorylated by IKBKE. Also phosphorylated by CSNK1E; this phosphorylation may inhibit RNA-stimulated ATPase activity. Post-translationally, upon stimulation of death receptors, including TNFRSF10B, recruited to receptors and cleaved by caspases. Proteolytic fragments remain associated with the receptors. This cleavage presumably inactivates DDX3X anti-apoptotic function. Ubiquitinated by RNF39 via 'Lys-48'-linked ubiquitination; leading to proteasomal degradation. Expressed in ovary, including in germinal vesicle immature and metaphase II (MII) stage oocytes (at protein level). In the brain, expressed in the granule cells of the cerebellum and dentate gyrus, the pyramidal cells of the hippocampus, the ependymal cells lining the ventricles, choroid plexi and olfactory bulb. Also accumulates in the thalamic nuclei, the dorsal region of the colliculi and the pontine nucleus.

It is found in the cell membrane. Its subcellular location is the nucleus. The protein resides in the cytoplasm. The protein localises to the stress granule. It localises to the inflammasome. It is found in the cell projection. Its subcellular location is the lamellipodium. It carries out the reaction ATP + H2O = ADP + phosphate + H(+). Its function is as follows. Multifunctional ATP-dependent RNA helicase. The ATPase activity can be stimulated by various ribo-and deoxynucleic acids indicative for a relaxed substrate specificity. In vitro can unwind partially double-stranded DNA with a preference for 5'-single-stranded DNA overhangs. Binds RNA G-quadruplex (rG4s) structures, including those located in the 5'-UTR of NRAS mRNA. Involved in many cellular processes, which do not necessarily require its ATPase/helicase catalytic activities. Involved in transcription regulation. Positively regulates CDKN1A/WAF1/CIP1 transcription in an SP1-dependent manner, hence inhibits cell growth. This function requires its ATPase, but not helicase activity. CDKN1A up-regulation may be cell-type specific. Binds CDH1/E-cadherin promoter and represses its transcription. Potentiates HNF4A-mediated MTTP transcriptional activation; this function requires ATPase, but not helicase activity. Facilitates HNF4A acetylation, possibly catalyzed by CREBBP/EP300, thereby increasing the DNA-binding affinity of HNF4 to its response element. In addition, disrupts the interaction between HNF4 and SHP that forms inactive heterodimers and enhances the formation of active HNF4 homodimers. By promoting HNF4A-induced MTTP expression, may play a role in lipid homeostasis. May positively regulate TP53 transcription. Associates with mRNPs, predominantly with spliced mRNAs carrying an exon junction complex (EJC). Involved in the regulation of translation initiation. Not involved in the general process of translation, but promotes efficient translation of selected complex mRNAs, containing highly structured 5'-untranslated regions (UTR). This function depends on helicase activity. Might facilitate translation by resolving secondary structures of 5'-UTRs during ribosome scanning. Alternatively, may act prior to 43S ribosomal scanning and promote 43S pre-initiation complex entry to mRNAs exhibiting specific RNA motifs, by performing local remodeling of transcript structures located close to the cap moiety. Independently of its ATPase activity, promotes the assembly of functional 80S ribosomes and disassembles from ribosomes prior to the translation elongation process. Positively regulates the translation of cyclin E1/CCNE1 mRNA and consequently promotes G1/S-phase transition during the cell cycle. May activate TP53 translation. Required for endoplasmic reticulum stress-induced ATF4 mRNA translation. Independently of its ATPase/helicase activity, enhances IRES-mediated translation; this activity requires interaction with EIF4E. Independently of its ATPase/helicase activity, has also been shown specifically repress cap-dependent translation, possibly by acting on translation initiation factor EIF4E. Involved in innate immunity, acting as a viral RNA sensor. Binds viral RNAs and promotes the production of type I interferon (IFN-alpha and IFN-beta). Potentiate MAVS/RIGI-mediated induction of IFNB in early stages of infection. Enhances IFNB1 expression via IRF3/IRF7 pathway and participates in NFKB activation in the presence of MAVS and TBK1. Involved in TBK1 and IKBKE-dependent IRF3 activation leading to IFNB induction, acts as a scaffolding adapter that links IKBKE and IRF3 and coordinates their activation. Involved in the TLR7/TLR8 signaling pathway leading to type I interferon induction, including IFNA4 production. In this context, acts as an upstream regulator of IRF7 activation by MAP3K14/NIK and CHUK/IKKA. Stimulates CHUK autophosphorylation and activation following physiological activation of the TLR7 and TLR8 pathways, leading to MAP3K14/CHUK-mediated activatory phosphorylation of IRF7. Also stimulates MAP3K14/CHUK-dependent NF-kappa-B signaling. Negatively regulates TNF-induced IL6 and IL8 expression, via the NF-kappa-B pathway. May act by interacting with RELA/p65 and trapping it in the cytoplasm. May also bind IFNB promoter; the function is independent of IRF3. Involved in both stress and inflammatory responses. Independently of its ATPase/helicase activity, required for efficient stress granule assembly through its interaction with EIF4E, hence promotes survival in stressed cells. Independently of its helicase activity, regulates NLRP3 inflammasome assembly through interaction with NLRP3 and hence promotes cell death by pyroptosis during inflammation. This function is independent of helicase activity. Therefore DDX3X availability may be used to interpret stress signals and choose between pro-survival stress granules and pyroptotic NLRP3 inflammasomes and serve as a live-or-die checkpoint in stressed cells. In association with GSK3A/B, negatively regulates extrinsic apoptotic signaling pathway via death domain receptors, including TNFRSF10B, slowing down the rate of CASP3 activation following death receptor stimulation. Cleavage by caspases may inactivate DDX3X and relieve the inhibition. Independently of its ATPase/helicase activity, allosteric activator of CSNK1E. Stimulates CSNK1E-mediated phosphorylation of DVL2, thereby involved in the positive regulation of Wnt/beta-catenin signaling pathway. Also activates CSNK1A1 and CSNK1D in vitro, but it is uncertain if these targets are physiologically relevant. ATPase and casein kinase-activating functions are mutually exclusive. May be involved in mitotic chromosome segregation. This Mus musculus (Mouse) protein is ATP-dependent RNA helicase DDX3X (Ddx3x).